Here is a 277-residue protein sequence, read N- to C-terminus: Putative phosphoenolpyruvate synthase regulatory protein (277 aa).

157-164 lines the ADP pocket; sequence GVSRCGKT.

Belongs to the pyruvate, phosphate/water dikinase regulatory protein family. PSRP subfamily.

It catalyses the reaction [pyruvate, water dikinase] + ADP = [pyruvate, water dikinase]-phosphate + AMP + H(+). The catalysed reaction is [pyruvate, water dikinase]-phosphate + phosphate + H(+) = [pyruvate, water dikinase] + diphosphate. Functionally, bifunctional serine/threonine kinase and phosphorylase involved in the regulation of the phosphoenolpyruvate synthase (PEPS) by catalyzing its phosphorylation/dephosphorylation. This is Putative phosphoenolpyruvate synthase regulatory protein from Citrobacter koseri (strain ATCC BAA-895 / CDC 4225-83 / SGSC4696).